A 331-amino-acid chain; its full sequence is Putative mitochondrial 2-oxoglutarate/malate carrier protein (331 aa).

Solcar repeat units follow at residues 39–128 (VRAA…FMSR), 140–231 (VGFK…AKAQ), and 239–329 (SSKV…LGWL). The next 6 helical transmembrane spans lie at 42 to 62 (ALPF…IQPI), 103 to 121 (GLSA…RIGC), 148 to 168 (AGLA…LALI), 199 to 219 (GVAA…ALNF), 245 to 265 (LSAS…FDFV), and 309 to 329 (YVRI…LGWL).

The protein belongs to the mitochondrial carrier (TC 2.A.29) family.

It is found in the mitochondrion inner membrane. Functionally, catalyzes the transport of 2-oxoglutarate across the inner mitochondrial membrane. The chain is Putative mitochondrial 2-oxoglutarate/malate carrier protein (mic-33) from Neurospora crassa (strain ATCC 24698 / 74-OR23-1A / CBS 708.71 / DSM 1257 / FGSC 987).